The chain runs to 346 residues: tRNA N6-adenosine threonylcarbamoyltransferase (346 aa).

His111 and His115 together coordinate Fe cation. Substrate contacts are provided by residues 134 to 138, Asp167, Gly180, and Asn279; that span reads LVSGG. Position 307 (Asp307) interacts with Fe cation.

Belongs to the KAE1 / TsaD family. Fe(2+) serves as cofactor.

It is found in the cytoplasm. It catalyses the reaction L-threonylcarbamoyladenylate + adenosine(37) in tRNA = N(6)-L-threonylcarbamoyladenosine(37) in tRNA + AMP + H(+). Functionally, required for the formation of a threonylcarbamoyl group on adenosine at position 37 (t(6)A37) in tRNAs that read codons beginning with adenine. Is involved in the transfer of the threonylcarbamoyl moiety of threonylcarbamoyl-AMP (TC-AMP) to the N6 group of A37, together with TsaE and TsaB. TsaD likely plays a direct catalytic role in this reaction. This Burkholderia vietnamiensis (strain G4 / LMG 22486) (Burkholderia cepacia (strain R1808)) protein is tRNA N6-adenosine threonylcarbamoyltransferase.